The sequence spans 330 residues: Class III chitinase ARB_03514 (330 aa).

Residues 1 to 22 (MSSVKNILSFVALFAGVKTAYA) form the signal peptide. Positions 23–314 (GLNSPGHNNV…SAVKGALSAG (292 aa)) constitute a GH18 domain. N61 and N135 each carry an N-linked (GlcNAc...) asparagine glycan. The active-site Proton donor is E155. N278 and N302 each carry an N-linked (GlcNAc...) asparagine glycan.

The protein belongs to the glycosyl hydrolase 18 family. Chitinase class III subfamily. As to quaternary structure, monomer.

Its subcellular location is the secreted. The enzyme catalyses Random endo-hydrolysis of N-acetyl-beta-D-glucosaminide (1-&gt;4)-beta-linkages in chitin and chitodextrins.. Its function is as follows. Secreted chitinase involved in the degradation of chitin, a component of the cell walls of fungi and exoskeletal elements of some animals (including worms and arthropods). Plays a morphogenetic role during apical growth, cell division and differentiation (cell wall morphogenesis). The polypeptide is Class III chitinase ARB_03514 (Arthroderma benhamiae (strain ATCC MYA-4681 / CBS 112371) (Trichophyton mentagrophytes)).